The sequence spans 217 residues: Octanoyltransferase (217 aa).

One can recognise a BPL/LPL catalytic domain in the interval 31-206; sequence KSVMDEAWLL…ELVSRLGYAE (176 aa). Substrate contacts are provided by residues 70-77, 137-139, and 150-152; these read RGGQVTYH, SLG, and GLA. The Acyl-thioester intermediate role is filled by C168.

This sequence belongs to the LipB family.

It localises to the cytoplasm. It catalyses the reaction octanoyl-[ACP] + L-lysyl-[protein] = N(6)-octanoyl-L-lysyl-[protein] + holo-[ACP] + H(+). Its pathway is protein modification; protein lipoylation via endogenous pathway; protein N(6)-(lipoyl)lysine from octanoyl-[acyl-carrier-protein]: step 1/2. Functionally, catalyzes the transfer of endogenously produced octanoic acid from octanoyl-acyl-carrier-protein onto the lipoyl domains of lipoate-dependent enzymes. Lipoyl-ACP can also act as a substrate although octanoyl-ACP is likely to be the physiological substrate. The sequence is that of Octanoyltransferase from Pseudomonas aeruginosa (strain UCBPP-PA14).